A 142-amino-acid chain; its full sequence is Small ribosomal subunit protein uS9 (142 aa).

Belongs to the universal ribosomal protein uS9 family.

It localises to the cytoplasm. The sequence is that of Small ribosomal subunit protein uS9 (RPS16) from Syntrichia ruralis (Great hairy screw-moss).